The sequence spans 134 residues: Protein NrdI (134 aa).

Belongs to the NrdI family.

Its function is as follows. Probably involved in ribonucleotide reductase function. This is Protein NrdI from Chromohalobacter salexigens (strain ATCC BAA-138 / DSM 3043 / CIP 106854 / NCIMB 13768 / 1H11).